Consider the following 664-residue polypeptide: Sulfoquinovosidase (664 aa).

The 3-(6-sulfo-alpha-D-quinovosyl)glycerol site is built by Glu-135, Glu-270, Arg-283, Leu-284, and Trp-286. Residue Asp-388 is the Nucleophile of the active site. Glu-391 is a catalytic residue. 3-(6-sulfo-alpha-D-quinovosyl)glycerol is bound at residue Arg-438. The Proton donor role is filled by Asp-455. His-520 contacts 3-(6-sulfo-alpha-D-quinovosyl)glycerol.

This sequence belongs to the glycosyl hydrolase 31 family.

The enzyme catalyses 3-(6-sulfo-alpha-D-quinovosyl)glycerol + H2O = 6-sulfo-alpha-D-quinovose + glycerol. Functionally, part of the sulfoquinovose monooxygenase (sulfo-SMO) pathway, a D-sulfoquinovose degradation pathway that enables the complete utilization of all carbons within sulfoquinovose (SQ) with concomitant production of inorganic sulfite. Catalyzes the first step of the pathway, the hydrolysis of sulfoquinovosyl glycerol (SQGro) to release sulfoquinovose (SQ). Hydrolyzes both epimers of SQGro, with a preference for the natural 2'R isomer. In vitro, can use the substrate analog para-nitrophenyl alpha-sulfoquinovoside (PNPSQ), but shows no detectable activity toward 4-nitrophenyl alpha-D-glucopyranoside (PNPGlc). This chain is Sulfoquinovosidase, found in Agrobacterium fabrum (strain C58 / ATCC 33970) (Agrobacterium tumefaciens (strain C58)).